Consider the following 365-residue polypeptide: Chorismate synthase (365 aa).

An NADP(+)-binding site is contributed by R46. FMN contacts are provided by residues 123-125 (RSS), 241-242 (NG), G281, 296-300 (KPTPS), and R322.

It belongs to the chorismate synthase family. In terms of assembly, homotetramer. The cofactor is FMNH2.

The enzyme catalyses 5-O-(1-carboxyvinyl)-3-phosphoshikimate = chorismate + phosphate. It functions in the pathway metabolic intermediate biosynthesis; chorismate biosynthesis; chorismate from D-erythrose 4-phosphate and phosphoenolpyruvate: step 7/7. Catalyzes the anti-1,4-elimination of the C-3 phosphate and the C-6 proR hydrogen from 5-enolpyruvylshikimate-3-phosphate (EPSP) to yield chorismate, which is the branch point compound that serves as the starting substrate for the three terminal pathways of aromatic amino acid biosynthesis. This reaction introduces a second double bond into the aromatic ring system. The polypeptide is Chorismate synthase (Helicobacter pylori (strain Shi470)).